Consider the following 607-residue polypeptide: BTB/POZ domain-containing protein DOT3 (607 aa).

Residues 52–121 (TDLSIQVNDI…CYNLPLDLNP (70 aa)) form the BTB domain. The NPH3 domain occupies 211-487 (RCLYNDIATL…VQINTQVLFS (277 aa)). Phosphotyrosine is present on Tyr-428. Disordered stretches follow at residues 498–520 (DKLP…SRDN) and 573–607 (KSFQ…MSMS). Composition is skewed to basic and acidic residues over residues 499-520 (KLPE…SRDN) and 577-586 (TKREDEETRE). The stretch at 511-563 (REDKRMSRDNEIIKTLKEELENVKKKMSELQSDYNELQQEYERLSSKQKSSHN) forms a coiled coil.

It belongs to the NPH3 family. Expressed in emerging leaf primordia.

Its pathway is protein modification; protein ubiquitination. Functionally, may act as a substrate-specific adapter of an E3 ubiquitin-protein ligase complex (CUL3-RBX1-BTB) which mediates the ubiquitination and subsequent proteasomal degradation of target proteins. Involved in leaf vasculature patterning. This Arabidopsis thaliana (Mouse-ear cress) protein is BTB/POZ domain-containing protein DOT3.